Consider the following 410-residue polypeptide: Arginine deiminase (410 aa).

The active-site Amidino-cysteine intermediate is Cys-399.

Belongs to the arginine deiminase family.

Its subcellular location is the cytoplasm. The catalysed reaction is L-arginine + H2O = L-citrulline + NH4(+). The protein operates within amino-acid degradation; L-arginine degradation via ADI pathway; carbamoyl phosphate from L-arginine: step 1/2. The protein is Arginine deiminase of Listeria monocytogenes serotype 4a (strain HCC23).